Consider the following 92-residue polypeptide: Small ribosomal subunit protein uS19c (92 aa).

It belongs to the universal ribosomal protein uS19 family.

Its subcellular location is the plastid. It is found in the chloroplast. Its function is as follows. Protein S19 forms a complex with S13 that binds strongly to the 16S ribosomal RNA. The chain is Small ribosomal subunit protein uS19c from Rhodomonas salina (Cryptomonas salina).